We begin with the raw amino-acid sequence, 1277 residues long: Myosin-1 (1277 aa).

Over residues 1–13 the composition is skewed to basic residues; the sequence is MAPSKKAGKKVTP. Residues 1–27 form a disordered region; sequence MAPSKKAGKKVTPKKAAGNNAKSKVAK. Residues 39–718 enclose the Myosin motor domain; that stretch reads VGVTDMTLLT…TLFALETMRD (680 aa). 132 to 139 contributes to the ATP binding site; sequence GESGAGKT. A Phosphoserine modification is found at Ser360. Positions 407 to 489 are actin-binding; the sequence is IIGILDIFGF…PGIFAALNDA (83 aa). The interval 567–587 is disordered; that stretch reads LFPDRPDPNSKKRPPTASDRI. IQ domains lie at 722–742 and 743–768; these read HNMA…KHEC and ARRI…YGHQ. One can recognise a TH1 domain in the interval 776-965; that stretch reads RRRFSLLSYR…TVHVPSGEPA (190 aa). Disordered stretches follow at residues 952–1072 and 1129–1259; these read YKSH…AEPE and PKAA…GPGQ. Residues 1015 to 1056 are compositionally biased toward low complexity; that stretch reads PAVATPSVVSTPAAAAVVSKPKPAASTPAAVRAPAVTPAARS. Residues 1057–1068 are compositionally biased toward pro residues; it reads VPPPPPPPPPAR. In terms of domain architecture, SH3 spans 1071-1129; the sequence is PEKEMYRAKFDFQGQEGEMSLTKDDEVELIEKDENGWWLVKKDGVEAWAPYNYLERIAP. The span at 1132–1142 shows a compositional bias: pro residues; the sequence is APAPPPPPARP. Composition is skewed to polar residues over residues 1145–1159 and 1185–1197; these read TSTV…TTAD and AATT…SSRP. Residues 1204-1224 are compositionally biased toward pro residues; it reads VPPPVAAKPKPPVVAPKPGVP. Residues 1226–1240 show a composition bias toward low complexity; it reads PGGKPALPTTARPAP. Gly residues predominate over residues 1241–1258; sequence SGGGAAAGRLGGGGGGPG.

Belongs to the TRAFAC class myosin-kinesin ATPase superfamily. Myosin family. Post-translationally, phosphorylation of the TEDS site (Ser-360) is required for the polarization of the actin cytoskeleton. Phosphorylation probably activates the myosin-I ATPase activity.

It localises to the cytoplasm. The protein localises to the cytoskeleton. It is found in the actin patch. Type-I myosin implicated in the organization of the actin cytoskeleton. Required for proper actin cytoskeleton polarization. At the cell cortex, assembles in patch-like structures together with proteins from the actin-polymerizing machinery and promotes actin assembly. Functions as actin nucleation-promoting factor (NPF) for the Arp2/3 complex. In Coprinopsis cinerea (strain Okayama-7 / 130 / ATCC MYA-4618 / FGSC 9003) (Inky cap fungus), this protein is Myosin-1 (MYO1).